The chain runs to 423 residues: Mannose-6-phosphate isomerase (423 aa).

A2 bears the N-acetylalanine mark. A phosphoserine mark is found at S102 and S108. 4 residues coordinate Zn(2+): Q110, H112, E137, and H276. The active site involves R295.

It belongs to the mannose-6-phosphate isomerase type 1 family. Requires Zn(2+) as cofactor. Expressed in all tissues, but more abundant in testis.

It is found in the cytoplasm. It catalyses the reaction D-mannose 6-phosphate = D-fructose 6-phosphate. Its pathway is nucleotide-sugar biosynthesis; GDP-alpha-D-mannose biosynthesis; alpha-D-mannose 1-phosphate from D-fructose 6-phosphate: step 1/2. Its function is as follows. Isomerase that catalyzes the interconversion of fructose-6-P and mannose-6-P and has a critical role in the supply of D-mannose derivatives required for many eukaryotic glycosylation reactions. The protein is Mannose-6-phosphate isomerase of Mus musculus (Mouse).